A 111-amino-acid chain; its full sequence is Cell division protein FtsB (111 aa).

Residues 1 to 3 (MGK) lie on the Cytoplasmic side of the membrane. The chain crosses the membrane as a helical span at residues 4–21 (LTLLLLILLGWLQYSLWL). Over 22–111 (GKNGIHDYVR…TNTSSNNTQR (90 aa)) the chain is Periplasmic. Positions 33-63 (KDDVVVQQGNNAKLKDRNEQLFAEIDDLNGG) form a coiled coil. The segment at 88-111 (VPESNHRNANTPSSTNTSSNNTQR) is disordered. Positions 97 to 111 (NTPSSTNTSSNNTQR) are enriched in low complexity.

It belongs to the FtsB family. As to quaternary structure, part of a complex composed of FtsB, FtsL and FtsQ.

The protein localises to the cell inner membrane. Functionally, essential cell division protein. May link together the upstream cell division proteins, which are predominantly cytoplasmic, with the downstream cell division proteins, which are predominantly periplasmic. In Pectobacterium atrosepticum (strain SCRI 1043 / ATCC BAA-672) (Erwinia carotovora subsp. atroseptica), this protein is Cell division protein FtsB.